The primary structure comprises 426 residues: 3-isopropylmalate dehydratase large subunit (426 aa).

Residues C307, C367, and C370 each coordinate [4Fe-4S] cluster.

This sequence belongs to the aconitase/IPM isomerase family. LeuC type 2 subfamily. As to quaternary structure, heterodimer of LeuC and LeuD. Requires [4Fe-4S] cluster as cofactor.

It carries out the reaction (2R,3S)-3-isopropylmalate = (2S)-2-isopropylmalate. Its pathway is amino-acid biosynthesis; L-leucine biosynthesis; L-leucine from 3-methyl-2-oxobutanoate: step 2/4. In terms of biological role, catalyzes the isomerization between 2-isopropylmalate and 3-isopropylmalate, via the formation of 2-isopropylmaleate. The sequence is that of 3-isopropylmalate dehydratase large subunit from Sulfurovum sp. (strain NBC37-1).